The chain runs to 597 residues: Probable HECT-type ubiquitin ligase-interacting protein creD (597 aa).

2 disordered regions span residues 375 to 398 (ELDP…GTLS) and 432 to 499 (LNIT…MATP). Residues 443 to 455 (TDHESQNDSEHRR) are compositionally biased toward basic and acidic residues. Residues 465 to 481 (PSSGSNSHSPSSPVLSR) show a composition bias toward low complexity. Residues 482–492 (RPSDEVDHEHV) are compositionally biased toward basic and acidic residues.

Belongs to the arrestin family. In terms of assembly, interacts with hulA.

Its function is as follows. Component of the regulatory network controlling carbon source utilization through ubiquitination and deubiquitination involving creA, creB, creC, creD and acrB. May be involved in signaling by recognizing appropriately phosphorylated substrates via its arrestin domains and then recruit a HECT-type ubiquitin ligase such as hulA, leading to ubiquitination of the substrate, providing a link between ubiquitination and phosphorylation in protein regulation and stability. In Aspergillus oryzae (strain ATCC 42149 / RIB 40) (Yellow koji mold), this protein is Probable HECT-type ubiquitin ligase-interacting protein creD (creD).